A 675-amino-acid chain; its full sequence is DNA ligase (675 aa).

NAD(+)-binding positions include Asp-43 to Asp-47, Ser-92 to Met-93, and Glu-122. Lys-124 functions as the N6-AMP-lysine intermediate in the catalytic mechanism. The NAD(+) site is built by Arg-145, Glu-179, Lys-295, and Lys-319. Residues Cys-413, Cys-416, Cys-431, and Cys-436 each contribute to the Zn(2+) site. In terms of domain architecture, BRCT spans Ser-597–Gln-675.

It belongs to the NAD-dependent DNA ligase family. LigA subfamily. Mg(2+) is required as a cofactor. Mn(2+) serves as cofactor.

The catalysed reaction is NAD(+) + (deoxyribonucleotide)n-3'-hydroxyl + 5'-phospho-(deoxyribonucleotide)m = (deoxyribonucleotide)n+m + AMP + beta-nicotinamide D-nucleotide.. Functionally, DNA ligase that catalyzes the formation of phosphodiester linkages between 5'-phosphoryl and 3'-hydroxyl groups in double-stranded DNA using NAD as a coenzyme and as the energy source for the reaction. It is essential for DNA replication and repair of damaged DNA. The chain is DNA ligase from Pediococcus pentosaceus (strain ATCC 25745 / CCUG 21536 / LMG 10740 / 183-1w).